The primary structure comprises 529 residues: DEP domain-containing protein 1B (529 aa).

One can recognise a DEP domain in the interval 24-108; sequence FRARMPLRRH…DNRHLYRFPP (85 aa). A Phosphoserine modification is found at serine 160. The Rho-GAP domain maps to 201–393; that stretch reads DSLEEVLNTK…FLMDNYQEIL (193 aa). Serine 436 bears the Phosphoserine mark.

The chain is DEP domain-containing protein 1B (Depdc1b) from Mus musculus (Mouse).